The following is a 102-amino-acid chain: Small ribosomal subunit protein uS10 (102 aa).

This sequence belongs to the universal ribosomal protein uS10 family. Part of the 30S ribosomal subunit.

In terms of biological role, involved in the binding of tRNA to the ribosomes. The protein is Small ribosomal subunit protein uS10 of Acidithiobacillus ferrooxidans (strain ATCC 53993 / BNL-5-31) (Leptospirillum ferrooxidans (ATCC 53993)).